The sequence spans 429 residues: 3-phosphoshikimate 1-carboxyvinyltransferase (429 aa).

The 3-phosphoshikimate site is built by Lys22, Ser23, and Arg27. Phosphoenolpyruvate is bound at residue Lys22. Residues Gly94 and Arg122 each contribute to the phosphoenolpyruvate site. Positions 167, 169, 315, and 342 each coordinate 3-phosphoshikimate. Gln169 serves as a coordination point for phosphoenolpyruvate. Asp315 serves as the catalytic Proton acceptor. Arg346 and Arg388 together coordinate phosphoenolpyruvate.

The protein belongs to the EPSP synthase family. As to quaternary structure, monomer.

It is found in the cytoplasm. The enzyme catalyses 3-phosphoshikimate + phosphoenolpyruvate = 5-O-(1-carboxyvinyl)-3-phosphoshikimate + phosphate. It functions in the pathway metabolic intermediate biosynthesis; chorismate biosynthesis; chorismate from D-erythrose 4-phosphate and phosphoenolpyruvate: step 6/7. Catalyzes the transfer of the enolpyruvyl moiety of phosphoenolpyruvate (PEP) to the 5-hydroxyl of shikimate-3-phosphate (S3P) to produce enolpyruvyl shikimate-3-phosphate and inorganic phosphate. The sequence is that of 3-phosphoshikimate 1-carboxyvinyltransferase from Geotalea daltonii (strain DSM 22248 / JCM 15807 / FRC-32) (Geobacter daltonii).